A 305-amino-acid polypeptide reads, in one-letter code: Ribosomal protein L11 methyltransferase (305 aa).

Thr152, Gly173, Asp195, and Asn237 together coordinate S-adenosyl-L-methionine.

It belongs to the methyltransferase superfamily. PrmA family.

The protein resides in the cytoplasm. It catalyses the reaction L-lysyl-[protein] + 3 S-adenosyl-L-methionine = N(6),N(6),N(6)-trimethyl-L-lysyl-[protein] + 3 S-adenosyl-L-homocysteine + 3 H(+). Methylates ribosomal protein L11. This is Ribosomal protein L11 methyltransferase from Hamiltonella defensa subsp. Acyrthosiphon pisum (strain 5AT).